A 558-amino-acid chain; its full sequence is Acid-sensing ion channel 4-B (558 aa).

Topologically, residues 1–71 (MPIEFVCKIK…TSERLGFRQT (71 aa)) are cytoplasmic. A helical membrane pass occupies residues 72–92 (LWGLALLVSLGLFLYQATWSA). The Extracellular portion of the chain corresponds to 93–433 (ATYLERPHLA…ETIEQKKAYD (341 aa)). Cystine bridges form between C120–C204 and C182–C189. Residues N140, N183, N188, N210, and N245 are each glycosylated (N-linked (GlcNAc...) asparagine). 5 disulfides stabilise this stretch: C298/C373, C317/C369, C321/C367, C330/C351, and C332/C344. A glycan (N-linked (GlcNAc...) asparagine) is linked at N374. Residues 434–454 (IAGLLGDIGGQMGLFIGASIL) traverse the membrane as a helical segment. Positions 450 to 452 (GAS) match the GAS motif; ion selectivity filter motif. Over 455–558 (TILEILDYIY…QQAVQQDFAC (104 aa)) the chain is Cytoplasmic.

The protein belongs to the amiloride-sensitive sodium channel (TC 1.A.6) family. ASIC4 subfamily. Homotrimer. Heterotrimer; with other ASIC proteins producing functional channels. As to expression, expressed in central nervous system.

Its subcellular location is the cell membrane. The catalysed reaction is Na(+)(in) = Na(+)(out). Does not exhibit measurable stand-alone pH-gated sodium channel activity but may form pH-gated heterotrimeric sodium channels. This chain is Acid-sensing ion channel 4-B, found in Danio rerio (Zebrafish).